Reading from the N-terminus, the 382-residue chain is N-acetyldiaminopimelate deacetylase (382 aa).

D73 is a catalytic residue. Residue E132 is the Proton acceptor of the active site.

It belongs to the peptidase M20A family. N-acetyldiaminopimelate deacetylase subfamily.

The enzyme catalyses N-acetyl-(2S,6S)-2,6-diaminopimelate + H2O = (2S,6S)-2,6-diaminopimelate + acetate. It participates in amino-acid biosynthesis; L-lysine biosynthesis via DAP pathway; LL-2,6-diaminopimelate from (S)-tetrahydrodipicolinate (acetylase route): step 3/3. Functionally, catalyzes the conversion of N-acetyl-diaminopimelate to diaminopimelate and acetate. The sequence is that of N-acetyldiaminopimelate deacetylase from Oenococcus oeni (strain ATCC BAA-331 / PSU-1).